A 164-amino-acid chain; its full sequence is Interleukin-10 (164 aa).

The first 18 residues, 1-18, serve as a signal peptide directing secretion; that stretch reads MPSSALLCCLIFLARVAA. Disulfide bonds link cysteine 30-cysteine 126 and cysteine 80-cysteine 132. N-linked (GlcNAc...) asparagine glycosylation is present at asparagine 134.

The protein belongs to the IL-10 family. Homodimer. Interacts with IL10RA and IL10RB.

The protein resides in the secreted. Functionally, major immune regulatory cytokine that acts on many cells of the immune system where it has profound anti-inflammatory functions, limiting excessive tissue disruption caused by inflammation. Mechanistically, IL10 binds to its heterotetrameric receptor comprising IL10RA and IL10RB leading to JAK1 and STAT2-mediated phosphorylation of STAT3. In turn, STAT3 translocates to the nucleus where it drives expression of anti-inflammatory mediators. Targets antigen-presenting cells (APCs) such as macrophages and monocytes and inhibits their release of pro-inflammatory cytokines including granulocyte-macrophage colony-stimulating factor /GM-CSF, granulocyte colony-stimulating factor/G-CSF, IL-1 alpha, IL-1 beta, IL-6, IL-8 and TNF-alpha. Also interferes with antigen presentation by reducing the expression of MHC-class II and co-stimulatory molecules, thereby inhibiting their ability to induce T cell activation. In addition, controls the inflammatory response of macrophages by reprogramming essential metabolic pathways including mTOR signaling. In Orcinus orca (Killer whale), this protein is Interleukin-10 (IL10).